A 123-amino-acid chain; its full sequence is Large ribosomal subunit protein bL17 (123 aa).

This sequence belongs to the bacterial ribosomal protein bL17 family. Part of the 50S ribosomal subunit. Contacts protein L32.

The chain is Large ribosomal subunit protein bL17 from Mycoplasma genitalium (strain ATCC 33530 / DSM 19775 / NCTC 10195 / G37) (Mycoplasmoides genitalium).